The sequence spans 92 residues: Dolichol-phosphate mannosyltransferase subunit 3 (92 aa).

2 consecutive transmembrane segments (helical) span residues 8 to 28 (LWAL…ALGL) and 37 to 57 (VLWP…LGTV).

It belongs to the DPM3 family. Component of the dolichol-phosphate mannose (DPM) synthase complex composed of DPM1, DPM2 and DPM3; within the complex, associates with DPM1 via its C-terminal domain and with DPM2 via its N-terminal portion. This interaction stabilizes DPM1 protein.

The protein localises to the endoplasmic reticulum membrane. It participates in protein modification; protein glycosylation. Functionally, stabilizer subunit of the dolichol-phosphate mannose (DPM) synthase complex; tethers catalytic subunit DPM1 to the endoplasmic reticulum. The sequence is that of Dolichol-phosphate mannosyltransferase subunit 3 (DPM3) from Bos taurus (Bovine).